The primary structure comprises 124 residues: Histone H2A (124 aa).

Residues 1-18 (MSGRGKGGKAKGKSKTRS) show a composition bias toward basic residues. The segment at 1–23 (MSGRGKGGKAKGKSKTRSSRAGL) is disordered. Ser2 carries the N-acetylserine modification. Ser2 carries the post-translational modification Phosphoserine. The residue at position 104 (Gln104) is an N5-methylglutamine.

Belongs to the histone H2A family. In terms of assembly, the nucleosome is a histone octamer containing two molecules each of H2A, H2B, H3 and H4 assembled in one H3-H4 heterotetramer and two H2A-H2B heterodimers. The octamer wraps approximately 147 bp of DNA. Post-translationally, phosphorylation of Ser-2 directly represses transcription.

It localises to the nucleus. It is found in the chromosome. Core component of nucleosome. Nucleosomes wrap and compact DNA into chromatin, limiting DNA accessibility to the cellular machineries which require DNA as a template. Histones thereby play a central role in transcription regulation, DNA repair, DNA replication and chromosomal stability. DNA accessibility is regulated via a complex set of post-translational modifications of histones, also called histone code, and nucleosome remodeling. This is Histone H2A from Platynereis dumerilii (Dumeril's clam worm).